A 217-amino-acid chain; its full sequence is Membrane-associated progesterone receptor component 2 (217 aa).

The O-linked (Xyl...) (chondroitin sulfate) serine glycan is linked to Ser-15. A helical membrane pass occupies residues 40-62 (ALLATGGEMLLNVALVALVLLGA). Phosphoserine occurs at positions 84, 98, and 202. Residues 96–195 (DFSLEQLRQY…EKYDYVGRLL (100 aa)) form the Cytochrome b5 heme-binding domain. The segment at 196–217 (KPGEEPSEYTDEEDTKDHSKQD) is disordered. The span at 200 to 209 (EPSEYTDEED) shows a compositional bias: acidic residues. Tyr-204 carries the phosphotyrosine modification. A Phosphothreonine modification is found at Thr-205.

This sequence belongs to the cytochrome b5 family. MAPR subfamily. Interacts with PGRMC1. Interacts with AAAS. As to expression, expressed in brown adipose tissue, white adipose tissue, liver, heart, skeletal muscle, brain and adrenal gland.

The protein localises to the membrane. The protein resides in the nucleus envelope. Its subcellular location is the endoplasmic reticulum. It localises to the secreted. In terms of biological role, required for the maintenance of uterine histoarchitecture and normal female reproductive lifespan. May serve as a universal non-classical progesterone receptor in the uterus. Intracellular heme chaperone required for delivery of labile, or signaling heme, to the nucleus. Plays a role in adipocyte function and systemic glucose homeostasis. In brown fat, which has a high demand for heme, delivery of labile heme in the nucleus regulates the activity of heme-responsive transcriptional repressors such as NR1D1 and BACH1. In Mus musculus (Mouse), this protein is Membrane-associated progesterone receptor component 2.